Reading from the N-terminus, the 362-residue chain is UDP-N-acetylglucosamine--N-acetylmuramyl-(pentapeptide) pyrophosphoryl-undecaprenol N-acetylglucosamine transferase (362 aa).

Residues 14 to 16 (TGG), asparagine 122, arginine 163, serine 190, and glutamine 285 contribute to the UDP-N-acetyl-alpha-D-glucosamine site.

The protein belongs to the glycosyltransferase 28 family. MurG subfamily.

It is found in the cell inner membrane. It carries out the reaction di-trans,octa-cis-undecaprenyl diphospho-N-acetyl-alpha-D-muramoyl-L-alanyl-D-glutamyl-meso-2,6-diaminopimeloyl-D-alanyl-D-alanine + UDP-N-acetyl-alpha-D-glucosamine = di-trans,octa-cis-undecaprenyl diphospho-[N-acetyl-alpha-D-glucosaminyl-(1-&gt;4)]-N-acetyl-alpha-D-muramoyl-L-alanyl-D-glutamyl-meso-2,6-diaminopimeloyl-D-alanyl-D-alanine + UDP + H(+). Its pathway is cell wall biogenesis; peptidoglycan biosynthesis. Functionally, cell wall formation. Catalyzes the transfer of a GlcNAc subunit on undecaprenyl-pyrophosphoryl-MurNAc-pentapeptide (lipid intermediate I) to form undecaprenyl-pyrophosphoryl-MurNAc-(pentapeptide)GlcNAc (lipid intermediate II). The polypeptide is UDP-N-acetylglucosamine--N-acetylmuramyl-(pentapeptide) pyrophosphoryl-undecaprenol N-acetylglucosamine transferase (Prochlorococcus marinus (strain MIT 9215)).